A 635-amino-acid polypeptide reads, in one-letter code: ATP-dependent zinc metalloprotease FtsH (635 aa).

Over 1-4 the chain is Cytoplasmic; that stretch reads MVKN. A helical membrane pass occupies residues 5 to 25; that stretch reads LVLWVVVAVIMMTAYQSFNSS. Residues 26–97 lie on the Periplasmic side of the membrane; sequence SVENSTDYTT…VEGTPFERRG (72 aa). A helical membrane pass occupies residues 98–118; it reads FLSQILISWFPMLFLVGVWVF. Residues 119-635 are Cytoplasmic-facing; the sequence is FMRQMQGGGG…AVENTDDFNV (517 aa). Residue 191 to 198 participates in ATP binding; the sequence is GPPGTGKT. Zn(2+) is bound at residue His-413. Glu-414 is an active-site residue. Residues His-417 and Asp-491 each contribute to the Zn(2+) site. The tract at residues 593–635 is disordered; sequence NREPVTPPSGWGEPKTQQAAYANSTTNDTKPESAVENTDDFNV. Positions 607–620 are enriched in polar residues; the sequence is KTQQAAYANSTTND.

It in the central section; belongs to the AAA ATPase family. The protein in the C-terminal section; belongs to the peptidase M41 family. As to quaternary structure, homohexamer. Zn(2+) serves as cofactor.

It localises to the cell inner membrane. Acts as a processive, ATP-dependent zinc metallopeptidase for both cytoplasmic and membrane proteins. Plays a role in the quality control of integral membrane proteins. This is ATP-dependent zinc metalloprotease FtsH from Haemophilus influenzae (strain ATCC 51907 / DSM 11121 / KW20 / Rd).